We begin with the raw amino-acid sequence, 331 residues long: DNA fragmentation factor subunit alpha (331 aa).

The residue at position 1 (Met-1) is an N-acetylmethionine. The 80-residue stretch at 17–96 folds into the CIDE-N domain; it reads TLKPCLLRRN…ALASNEKWAY (80 aa). Thr-243 bears the Phosphothreonine mark. A disordered region spans residues 305 to 331; the sequence is SLRSISASKASPPGDLQNPKRARQDPT. Position 315 is a phosphoserine (Ser-315).

In terms of assembly, heterodimer of DFFA and DFFB. Post-translationally, caspase-3 cleaves DFF45 at 2 sites to generate an active factor.

Its subcellular location is the cytoplasm. Its function is as follows. Inhibitor of the caspase-activated DNase (DFF40). This Homo sapiens (Human) protein is DNA fragmentation factor subunit alpha (DFFA).